The sequence spans 357 residues: Fructose-1,6-bisphosphatase class 1 3 (357 aa).

Residues E94, D116, L118, and D119 each contribute to the Mg(2+) site. Residues 119-122 and N211 contribute to the substrate site; that span reads DGSS. E283 lines the Mg(2+) pocket.

It belongs to the FBPase class 1 family. Homotetramer. The cofactor is Mg(2+).

It is found in the cytoplasm. It carries out the reaction beta-D-fructose 1,6-bisphosphate + H2O = beta-D-fructose 6-phosphate + phosphate. It participates in carbohydrate biosynthesis; Calvin cycle. The polypeptide is Fructose-1,6-bisphosphatase class 1 3 (Methylibium petroleiphilum (strain ATCC BAA-1232 / LMG 22953 / PM1)).